A 310-amino-acid chain; its full sequence is N-acetyl-gamma-glutamyl-phosphate reductase (310 aa).

Cys116 is a catalytic residue.

Belongs to the NAGSA dehydrogenase family. Type 2 subfamily.

The protein localises to the cytoplasm. It catalyses the reaction N-acetyl-L-glutamate 5-semialdehyde + phosphate + NADP(+) = N-acetyl-L-glutamyl 5-phosphate + NADPH + H(+). It participates in amino-acid biosynthesis; L-arginine biosynthesis; N(2)-acetyl-L-ornithine from L-glutamate: step 3/4. In terms of biological role, catalyzes the NADPH-dependent reduction of N-acetyl-5-glutamyl phosphate to yield N-acetyl-L-glutamate 5-semialdehyde. The polypeptide is N-acetyl-gamma-glutamyl-phosphate reductase (Chelativorans sp. (strain BNC1)).